Consider the following 317-residue polypeptide: Ribosomal lysine N-methyltransferase 5 (317 aa).

S-adenosyl-L-methionine-binding positions include Trp87, 141–143 (GSG), Asp163, Trp214, and Leu237.

This sequence belongs to the class I-like SAM-binding methyltransferase superfamily. RKM5 family.

S-adenosyl-L-methionine-dependent protein-lysine N-methyltransferase that methylates 60S ribosomal protein L1. In Eremothecium gossypii (strain ATCC 10895 / CBS 109.51 / FGSC 9923 / NRRL Y-1056) (Yeast), this protein is Ribosomal lysine N-methyltransferase 5 (RKM5).